The chain runs to 473 residues: Trigger factor (473 aa).

Positions 171–256 (GDRVTIDFVG…VTKIQAAGEA (86 aa)) constitute a PPIase FKBP-type domain. Positions 439–473 (KEALFADEDGDDTTGGKPADKAEAKDESKTEAKAD) are disordered. A compositionally biased stretch (basic and acidic residues) spans 456-473 (PADKAEAKDESKTEAKAD).

This sequence belongs to the FKBP-type PPIase family. Tig subfamily.

The protein localises to the cytoplasm. The catalysed reaction is [protein]-peptidylproline (omega=180) = [protein]-peptidylproline (omega=0). In terms of biological role, involved in protein export. Acts as a chaperone by maintaining the newly synthesized protein in an open conformation. Functions as a peptidyl-prolyl cis-trans isomerase. In Methylobacterium radiotolerans (strain ATCC 27329 / DSM 1819 / JCM 2831 / NBRC 15690 / NCIMB 10815 / 0-1), this protein is Trigger factor.